The sequence spans 540 residues: Dynein axonemal assembly factor 3 homolog (540 aa).

Positions 480–499 (AVTEAMPESTFKYDTDTDYG) are disordered.

The protein belongs to the DNAAF3 family. Expressed in mechanosensory chordotonal (Ch) neurons, spermatocytes and spermatids (at protein level).

It localises to the cytoplasm. The protein resides in the dynein axonemal particle. Functionally, required for the assembly of axonemal inner and outer dynein arms. Involved in the cytoplasmic preassembly of dyneins into complexes before their transport into cilia. Essential for the development of axonemal dynein motors in the sensory cilium of mechanosensory chordotonal (Ch) neurons and sperm flagellum, and consequently, is required for the mechanotransduction process of hearing and sperm mobility. The protein is Dynein axonemal assembly factor 3 homolog of Drosophila melanogaster (Fruit fly).